The chain runs to 135 residues: Nitrogen fixation protein NifU 1 (135 aa).

Residues 1 to 10 show a composition bias toward basic and acidic residues; the sequence is MRDMQDDDTK. The disordered stretch occupies residues 1–29; the sequence is MRDMQDDDTKSPAPPPAAAAAARRAAGQA. A compositionally biased stretch (low complexity) spans 18 to 29; the sequence is AAAAARRAAGQA.

This sequence belongs to the NifU family.

Its function is as follows. May be involved in the formation or repair of [Fe-S] clusters present in iron-sulfur proteins. The polypeptide is Nitrogen fixation protein NifU 1 (nifU1) (Rhodobacter capsulatus (Rhodopseudomonas capsulata)).